Here is a 225-residue protein sequence, read N- to C-terminus: Holliday junction branch migration complex subunit RuvA (225 aa).

The interval methionine 1–threonine 71 is domain I. Positions serine 72–serine 150 are domain II. The segment at lysine 151 to isoleucine 161 is flexible linker. Positions isoleucine 161–arginine 225 are domain III.

This sequence belongs to the RuvA family. As to quaternary structure, homotetramer. Forms an RuvA(8)-RuvB(12)-Holliday junction (HJ) complex. HJ DNA is sandwiched between 2 RuvA tetramers; dsDNA enters through RuvA and exits via RuvB. An RuvB hexamer assembles on each DNA strand where it exits the tetramer. Each RuvB hexamer is contacted by two RuvA subunits (via domain III) on 2 adjacent RuvB subunits; this complex drives branch migration. In the full resolvosome a probable DNA-RuvA(4)-RuvB(12)-RuvC(2) complex forms which resolves the HJ.

It is found in the cytoplasm. Its function is as follows. The RuvA-RuvB-RuvC complex processes Holliday junction (HJ) DNA during genetic recombination and DNA repair, while the RuvA-RuvB complex plays an important role in the rescue of blocked DNA replication forks via replication fork reversal (RFR). RuvA specifically binds to HJ cruciform DNA, conferring on it an open structure. The RuvB hexamer acts as an ATP-dependent pump, pulling dsDNA into and through the RuvAB complex. HJ branch migration allows RuvC to scan DNA until it finds its consensus sequence, where it cleaves and resolves the cruciform DNA. The protein is Holliday junction branch migration complex subunit RuvA of Prochlorococcus marinus (strain MIT 9301).